Reading from the N-terminus, the 425-residue chain is GTPase Obg (425 aa).

The Obg domain occupies 1–158 (MFVDVARIYV…RWLLLELKVV (158 aa)). One can recognise an OBG-type G domain in the interval 159-330 (ADVGLVGFPN…LLEAAYDLIR (172 aa)). GTP is bound by residues 165-172 (GFPNAGKS), 190-194 (FTTLT), 212-215 (DIPG), 282-285 (NKMD), and 311-313 (SGA). 2 residues coordinate Mg(2+): S172 and T192. Residues 345–422 (VYRPKEEGWR…VCDIEFELMA (78 aa)) enclose the OCT domain.

This sequence belongs to the TRAFAC class OBG-HflX-like GTPase superfamily. OBG GTPase family. Monomer. It depends on Mg(2+) as a cofactor.

It localises to the cytoplasm. Its function is as follows. An essential GTPase which binds GTP, GDP and possibly (p)ppGpp with moderate affinity, with high nucleotide exchange rates and a fairly low GTP hydrolysis rate. Plays a role in control of the cell cycle, stress response, ribosome biogenesis and in those bacteria that undergo differentiation, in morphogenesis control. In Symbiobacterium thermophilum (strain DSM 24528 / JCM 14929 / IAM 14863 / T), this protein is GTPase Obg.